The chain runs to 497 residues: uncharacterized protein (497 aa).

The segment at 58–79 (ISTRSFRNDGNDSDPQTLDPDA) is disordered. 12 consecutive transmembrane segments (helical) span residues 86 to 106 (IAFVLLNSILSDMSMSTALPI), 120 to 140 (FSGLVIGIPTMISLVCLYPML), 155 to 175 (FRPLIVSCISQIIGHLLYSLA), 180 to 200 (WLYLILIGRMCNGVGFTMFLY), 222 to 242 (LNILAQTVGFMAGSFLGGLLA), 258 to 278 (VGSWFMLFAWCIYGILLSIFF), 309 to 329 (FMLVFLSMVAFISYFNIAGYQ), 348 to 368 (GNFLSLSALVIAPLVFLSTFL), 378 to 398 (MLYGFILGILALVVHLVLDVL), 407 to 427 (FVLYSAMQFGFSIGSAPLISL), 438 to 458 (ILVGIIVQIGISAADTVGAIC), and 468 to 488 (VGFIALNLGIAVLVFIQLLFL).

This sequence belongs to the major facilitator superfamily.

It localises to the membrane. This is an uncharacterized protein from Schizosaccharomyces pombe (strain 972 / ATCC 24843) (Fission yeast).